The primary structure comprises 352 residues: MEGISIYTSDNYTEEMGSGDYDSIKEPCFREENAHFNRIFLPTIYSIIFLTGIVGNGLVILVMGYQKKLRSMTDKYRLHLSVADLLFVITLPFWAVDAVANWYFGNFLCKAVHVIYTVNLYSSVLILAFISLDRYLAIVHATNSQKPRKLLAEKVVYVGVWIPALLLTIPDFIFASVSEADDRYICDRFYPNDLWVVVFQFQHIMVGLILPGIDILSCYCIIISKLSHSKGHQKRKALKTTVILILAFFACWLPYYIGISIDSFILLEIIKQGCEFENTVHKWISITEALAFFHCCLNPILYAFLGAKFKTSAQHALTSVSRGSSLKILSKGKRGGHSSVSTESESSSFHSS.

An important for chemokine binding and signaling region spans residues 1–21; sequence MEGISIYTSDNYTEEMGSGDY. Residues 1–38 lie on the Extracellular side of the membrane; it reads MEGISIYTSDNYTEEMGSGDYDSIKEPCFREENAHFNR. A Sulfotyrosine modification is found at tyrosine 7. Asparagine 11 carries N-linked (GlcNAc...) asparagine glycosylation. Position 12 is a sulfotyrosine (tyrosine 12). Serine 18 carries O-linked (Xyl...) (chondroitin sulfate) serine glycosylation. A Sulfotyrosine modification is found at tyrosine 21. Intrachain disulfides connect cysteine 28–cysteine 274 and cysteine 109–cysteine 186. The chain crosses the membrane as a helical span at residues 39 to 63; sequence IFLPTIYSIIFLTGIVGNGLVILVM. The Cytoplasmic portion of the chain corresponds to 64–77; that stretch reads GYQKKLRSMTDKYR. Residues 78–99 form a helical membrane-spanning segment; sequence LHLSVADLLFVITLPFWAVDAV. A chemokine binding region spans residues 94-97; sequence WAVD. Topologically, residues 100-110 are extracellular; the sequence is ANWYFGNFLCK. The helical transmembrane segment at 111–130 threads the bilayer; sequence AVHVIYTVNLYSSVLILAFI. The interval 113 to 117 is chemokine binding; it reads HVIYT. The Cytoplasmic portion of the chain corresponds to 131-154; the sequence is SLDRYLAIVHATNSQKPRKLLAEK. Positions 133–135 match the Important for signaling motif; the sequence is DRY. Positions 135–147 are involved in dimerization; when bound to chemokine; it reads YLAIVHATNSQKP. Residues 155–174 form a helical membrane-spanning segment; sequence VVYVGVWIPALLLTIPDFIF. Residues 175–195 lie on the Extracellular side of the membrane; that stretch reads ASVSEADDRYICDRFYPNDLW. The tract at residues 186–190 is chemokine binding, important for signaling; that stretch reads CDRFY. Positions 191–210 are involved in dimerization; the sequence is PNDLWVVVFQFQHIMVGLIL. The chain crosses the membrane as a helical span at residues 196 to 216; that stretch reads VVVFQFQHIMVGLILPGIDIL. Residues 217 to 241 are Cytoplasmic-facing; it reads SCYCIIISKLSHSKGHQKRKALKTT. The helical transmembrane segment at 242 to 261 threads the bilayer; that stretch reads VILILAFFACWLPYYIGISI. Residues 262–282 lie on the Extracellular side of the membrane; it reads DSFILLEIIKQGCEFENTVHK. Residues 266–268 form an involved in dimerization region; it reads LLE. A helical membrane pass occupies residues 283–302; it reads WISITEALAFFHCCLNPILY. Topologically, residues 303-352 are cytoplasmic; the sequence is AFLGAKFKTSAQHALTSVSRGSSLKILSKGKRGGHSSVSTESESSSFHSS. Serine 319 and serine 321 each carry phosphoserine. Residues serine 324 and serine 325 each carry the phosphoserine; by PKC and GRK6 modification. The tract at residues 329–352 is disordered; it reads LSKGKRGGHSSVSTESESSSFHSS. The residue at position 330 (serine 330) is a Phosphoserine; by GRK6. Residue lysine 331 forms a Glycyl lysine isopeptide (Lys-Gly) (interchain with G-Cter in ubiquitin) linkage. Residues 337–352 show a composition bias toward low complexity; that stretch reads HSSVSTESESSSFHSS. Serine 339 is subject to Phosphoserine; by GRK6. 2 positions are modified to phosphoserine: serine 348 and serine 351.

It belongs to the G-protein coupled receptor 1 family. Monomer. Can form homodimers. Interacts with CD164. Interacts with ARRB2; the interaction is dependent on the C-terminal phosphorylation of CXCR4 and allows activation of MAPK1 and MAPK3. Interacts with ARR3; the interaction is dependent on the C-terminal phosphorylation of CXCR4 and modulates calcium mobilization. Interacts with RNF113A; the interaction, enhanced by CXCL12, promotes CXCR4 ubiquitination and subsequent degradation. Interacts (via the cytoplasmic C-terminal) with ITCH (via the WW domains I and II); the interaction, enhanced by CXCL12, promotes CXCR4 ubiquitination and leads to its degradation. Interacts with extracellular ubiquitin. Interacts with DBN1; this interaction is enhanced by antigenic stimulation. Following LPS binding, may form a complex with GDF5, HSP90AA1 and HSPA8. Phosphorylated on agonist stimulation. Rapidly phosphorylated on serine and threonine residues in the C-terminal. Phosphorylation at Ser-324 and Ser-325 leads to recruitment of ITCH, ubiquitination and protein degradation. Post-translationally, ubiquitinated after ligand binding, leading to its degradation. Ubiquitinated by ITCH at the cell membrane on agonist stimulation. The ubiquitin-dependent mechanism, endosomal sorting complex required for transport (ESCRT), then targets CXCR4 for lysosomal degradation. This process is dependent also on prior Ser-/Thr-phosphorylation in the C-terminal of CXCR4. Also binding of ARRB1 to STAM negatively regulates CXCR4 sorting to lysosomes though modulating ubiquitination of SFR5S. In terms of processing, sulfation is required for efficient binding of CXCL12/SDF-1alpha and promotes its dimerization. O- and N-glycosylated. N-glycosylation can mask coreceptor function. The O-glycosylation chondroitin sulfate attachment does not affect interaction with CXCL12/SDF-1alpha nor its coreceptor activity.

Its subcellular location is the cell membrane. The protein localises to the cell junction. The protein resides in the early endosome. It is found in the late endosome. It localises to the lysosome. Its function is as follows. Receptor for the C-X-C chemokine CXCL12/SDF-1 that transduces a signal by increasing intracellular calcium ion levels and enhancing MAPK1/MAPK3 activation. Involved in the AKT signaling cascade. Plays a role in regulation of cell migration, e.g. during wound healing. Acts as a receptor for extracellular ubiquitin; leading to enhanced intracellular calcium ions and reduced cellular cAMP levels. Binds bacterial lipopolysaccharide (LPS) et mediates LPS-induced inflammatory response, including TNF secretion by monocytes. Involved in hematopoiesis and in cardiac ventricular septum formation. Also plays an essential role in vascularization of the gastrointestinal tract, probably by regulating vascular branching and/or remodeling processes in endothelial cells. Involved in cerebellar development. In the CNS, could mediate hippocampal-neuron survival. The protein is C-X-C chemokine receptor type 4 (CXCR4) of Macaca mulatta (Rhesus macaque).